A 155-amino-acid chain; its full sequence is Ribosome maturation factor RimP (155 aa).

Belongs to the RimP family.

Its subcellular location is the cytoplasm. Functionally, required for maturation of 30S ribosomal subunits. The chain is Ribosome maturation factor RimP from Parabacteroides distasonis (strain ATCC 8503 / DSM 20701 / CIP 104284 / JCM 5825 / NCTC 11152).